The chain runs to 480 residues: Probable WRKY transcription factor 61 (480 aa).

Residues 30 to 108 (NQLMAKHNEP…RNYDDNEKSS (79 aa)) form a disordered region. Basic and acidic residues-rich tracts occupy residues 57–66 (REKVNEREEL) and 84–106 (NKEE…DNEK). Positions 185–251 (CETPTMNDGC…YEGTHNHPLP (67 aa)) form a DNA-binding region, WRKY.

The protein resides in the nucleus. In terms of biological role, transcription factor. Interacts specifically with the W box (5'-(T)TGAC[CT]-3'), a frequently occurring elicitor-responsive cis-acting element. This is Probable WRKY transcription factor 61 (WRKY61) from Arabidopsis thaliana (Mouse-ear cress).